The chain runs to 680 residues: Extracellular matrix protein 2 (680 aa).

Positions methionine 1 to glycine 20 are cleaved as a signal peptide. A VWFC domain is found at glycine 100–serine 157. A compositionally biased stretch (acidic residues) spans glutamine 189 to lysine 198. Residues glutamine 189–glycine 293 form a disordered region. Over residues glutamine 223 to glutamine 238 the composition is skewed to basic and acidic residues. Acidic residues predominate over residues asparagine 249–glutamate 272. Residues arginine 275–aspartate 277 carry the Cell attachment site motif. The 38-residue stretch at proline 288 to glutamate 325 folds into the LRRNT domain. LRR repeat units follow at residues asparagine 349–alanine 369, asparagine 375–threonine 396, leucine 397–aspartate 417, glutamine 420–alanine 440, serine 446–alanine 466, serine 467–histidine 488, lysine 491–alanine 511, asparagine 517–serine 538, leucine 539–histidine 559, glycine 563–serine 583, serine 590–methionine 611, alanine 613–asparagine 634, and asparagine 642–cysteine 665. N-linked (GlcNAc...) asparagine glycosylation occurs at asparagine 359. Asparagine 430 carries an N-linked (GlcNAc...) asparagine glycan. Asparagine 487 carries an N-linked (GlcNAc...) asparagine glycan.

Belongs to the small leucine-rich proteoglycan (SLRP) family. SLRP class I subfamily. Interacts with numerous extracellular matrix proteins. Interacts with MSL1 and RASSF1.

It localises to the secreted. The protein localises to the extracellular space. It is found in the extracellular matrix. Functionally, promotes matrix assembly and cell adhesiveness. In Bos taurus (Bovine), this protein is Extracellular matrix protein 2 (ECM2).